A 110-amino-acid chain; its full sequence is uncharacterized protein (110 aa).

Its subcellular location is the mitochondrion. This is an uncharacterized protein from Arabidopsis thaliana (Mouse-ear cress).